The primary structure comprises 358 residues: UDP-N-acetylglucosamine--N-acetylmuramyl-(pentapeptide) pyrophosphoryl-undecaprenol N-acetylglucosamine transferase (358 aa).

Residues Thr12–Gly14, Arg165, Ser195, and Gln290 contribute to the UDP-N-acetyl-alpha-D-glucosamine site.

Belongs to the glycosyltransferase 28 family. MurG subfamily.

The protein resides in the cell membrane. The catalysed reaction is di-trans,octa-cis-undecaprenyl diphospho-N-acetyl-alpha-D-muramoyl-L-alanyl-D-glutamyl-meso-2,6-diaminopimeloyl-D-alanyl-D-alanine + UDP-N-acetyl-alpha-D-glucosamine = di-trans,octa-cis-undecaprenyl diphospho-[N-acetyl-alpha-D-glucosaminyl-(1-&gt;4)]-N-acetyl-alpha-D-muramoyl-L-alanyl-D-glutamyl-meso-2,6-diaminopimeloyl-D-alanyl-D-alanine + UDP + H(+). Its pathway is cell wall biogenesis; peptidoglycan biosynthesis. In terms of biological role, cell wall formation. Catalyzes the transfer of a GlcNAc subunit on undecaprenyl-pyrophosphoryl-MurNAc-pentapeptide (lipid intermediate I) to form undecaprenyl-pyrophosphoryl-MurNAc-(pentapeptide)GlcNAc (lipid intermediate II). This Clostridium tetani (strain Massachusetts / E88) protein is UDP-N-acetylglucosamine--N-acetylmuramyl-(pentapeptide) pyrophosphoryl-undecaprenol N-acetylglucosamine transferase.